The sequence spans 353 residues: Membrane lipoprotein TmpC (353 aa).

The signal sequence occupies residues 1–20; sequence MREKWVRAFAGVFCAMLLIG. Cysteine 21 carries N-palmitoyl cysteine lipidation. Cysteine 21 carries S-diacylglycerol cysteine lipidation. Residue aspartate 47 coordinates guanosine. Aspartate 47 is an inosine binding site. Adenosine is bound by residues 47-48 and phenylalanine 56; that span reads DS. Guanosine is bound by residues asparagine 57, aspartate 128, phenylalanine 206, glycine 232, aspartate 258, and lysine 280. Positions 57 and 128 each coordinate inosine. Adenosine-binding residues include aspartate 128, phenylalanine 206, glycine 232, aspartate 258, and lysine 280. Inosine-binding residues include glycine 232, aspartate 258, and lysine 280.

The protein belongs to the BMP lipoprotein family. Monomer.

The protein resides in the cell membrane. Functionally, binds purine nucleosides and may play a role in purine nucleoside uptake. May be part of an ABC-type nucleoside uptake system. Has highest affinity for guanosine, followed by inosine and adenosine. Has very low affinity for cytidine and does not bind thymidine. The protein is Membrane lipoprotein TmpC (tmpC) of Treponema pallidum (strain Nichols).